A 342-amino-acid chain; its full sequence is Pre-mRNA-splicing factor 18 (342 aa).

At Met-1 the chain carries N-acetylmethionine.

This sequence belongs to the PRP18 family. Heterodimer with PPIH. Interacts with PRPF4 and with the spliceosome. Part of a complex containing U4/U6 snRNPs.

The protein localises to the nucleus speckle. In terms of biological role, participates in the second step of pre-mRNA splicing. In Mus musculus (Mouse), this protein is Pre-mRNA-splicing factor 18 (Prpf18).